We begin with the raw amino-acid sequence, 355 residues long: MSMAECTREQRKRRGAGRADEHWRTLSPASCAADALTEHISPAYAHLIAQAQGADAQALKRQVCFAPQERVVHACECADPLGEDRYCVTPFLVHQYANRVLMLATGRCFSHCRYCFRRGFIAQRAGWIPNEEREKIITYLRATPSVKEILVSGGDPLTGSFAQVTSLFRALRSVAPDLIIRLCTRAVTFAPQAFTPELIAFLQEMKPVWIIPHINHPAELGSTQRAVLEACVGAGLPVQSQSVLLRGVNDSVETLCTLFHALTCLGVKPGYLFQLDLAPGTGDFRVPLSDTLALWRTLKERLSGLSLPTLAVDLPGGGGKFPLVALALQQDVTWHQEREAFSARGIDGAWYTYPF.

The 216-residue stretch at V93–P308 folds into the Radical SAM core domain. 3 residues coordinate [4Fe-4S] cluster: C108, C112, and C115. An N6-(pyridoxal phosphate)lysine modification is found at K320.

The protein belongs to the radical SAM superfamily. KamA family. [4Fe-4S] cluster serves as cofactor. It depends on pyridoxal 5'-phosphate as a cofactor.

The sequence is that of Putative L-lysine 2,3-aminomutase from Treponema pallidum (strain Nichols).